The sequence spans 388 residues: 3-dehydroquinate synthase (388 aa).

NAD(+)-binding positions include 85 to 90, 119 to 123, 143 to 144, Lys156, Lys165, and 183 to 186; these read DGEQYK, GVIGD, TT, and TLKT. Residues Glu198, His261, and His278 each coordinate Zn(2+).

The protein belongs to the sugar phosphate cyclases superfamily. Dehydroquinate synthase family. Requires Co(2+) as cofactor. The cofactor is Zn(2+). NAD(+) is required as a cofactor.

The protein localises to the cytoplasm. It catalyses the reaction 7-phospho-2-dehydro-3-deoxy-D-arabino-heptonate = 3-dehydroquinate + phosphate. The protein operates within metabolic intermediate biosynthesis; chorismate biosynthesis; chorismate from D-erythrose 4-phosphate and phosphoenolpyruvate: step 2/7. Functionally, catalyzes the conversion of 3-deoxy-D-arabino-heptulosonate 7-phosphate (DAHP) to dehydroquinate (DHQ). This chain is 3-dehydroquinate synthase, found in Psychrobacter arcticus (strain DSM 17307 / VKM B-2377 / 273-4).